A 293-amino-acid polypeptide reads, in one-letter code: L-ornithine N(alpha)-acyltransferase (293 aa).

This sequence belongs to the acetyltransferase family. OlsB subfamily.

The catalysed reaction is a (3R)-hydroxyacyl-[ACP] + L-ornithine = a lyso-ornithine lipid + holo-[ACP] + H(+). Its pathway is lipid metabolism. Its function is as follows. Catalyzes the first step in the biosynthesis of ornithine lipids, which are phosphorus-free membrane lipids. Catalyzes the 3-hydroxyacyl-acyl carrier protein-dependent acylation of ornithine to form lyso-ornithine lipid (LOL). This is L-ornithine N(alpha)-acyltransferase from Agrobacterium fabrum (strain C58 / ATCC 33970) (Agrobacterium tumefaciens (strain C58)).